The primary structure comprises 421 residues: Functional amyloid transporter FapF (421 aa).

The first 24 residues, 1–24, serve as a signal peptide directing secretion; it reads MTQTLSLRAVLCATTLVSPFLAQA. Residues 23 to 64 are a coiled coil; it reads QAATESEVEALKKELLELRQRYEAQQNALMVLEQRVRQVEAQ.

Belongs to the amyloid transporter (TC 9.B.153) family.

It is found in the secreted. The protein resides in the cell surface. The protein localises to the cell outer membrane. In terms of biological role, transports fibril components across the outer membrane. Upon overexpression of the endogenous six-gene locus (fapA-fapF), cells form large clumps during liquid growth, make large amounts of biofilm and produce amyloid fibrils. This is Functional amyloid transporter FapF from Pseudomonas aeruginosa (strain ATCC 15692 / DSM 22644 / CIP 104116 / JCM 14847 / LMG 12228 / 1C / PRS 101 / PAO1).